The sequence spans 270 residues: Fructose-2,6-bisphosphatase TIGAR (270 aa).

His-11 functions as the Tele-phosphohistidine intermediate in the catalytic mechanism. At Lys-50 the chain carries N6-acetyllysine. Glu-89 serves as the catalytic Proton donor/acceptor.

The protein belongs to the phosphoglycerate mutase family. As to quaternary structure, interacts with HK2; the interaction increases hexokinase HK2 activity in a hypoxia- and HIF1A-dependent manner, resulting in the regulation of mitochondrial membrane potential, thus increasing NADPH production and decreasing intracellular ROS levels.

It is found in the cytoplasm. The protein resides in the nucleus. Its subcellular location is the mitochondrion. The catalysed reaction is beta-D-fructose 2,6-bisphosphate + H2O = beta-D-fructose 6-phosphate + phosphate. Fructose-bisphosphatase hydrolyzing fructose-2,6-bisphosphate as well as fructose-1,6-bisphosphate. Acts as a negative regulator of glycolysis by lowering intracellular levels of fructose-2,6-bisphosphate in a p53/TP53-dependent manner, resulting in the pentose phosphate pathway (PPP) activation and NADPH production. Contributes to the generation of reduced glutathione to cause a decrease in intracellular reactive oxygen species (ROS) content, correlating with its ability to protect cells from oxidative or metabolic stress-induced cell death. Plays a role in promoting protection against cell death during hypoxia by decreasing mitochondria ROS levels in a HK2-dependent manner through a mechanism that is independent of its fructose-bisphosphatase activity. In response to cardiac damage stress, mediates p53-induced inhibition of myocyte mitophagy through ROS levels reduction and the subsequent inactivation of BNIP3. Reduced mitophagy results in an enhanced apoptotic myocyte cell death, and exacerbates cardiac damage. Plays a role in adult intestinal regeneration; contributes to the growth, proliferation and survival of intestinal crypts following tissue ablation. Plays a neuroprotective role against ischemic brain damage by enhancing PPP flux and preserving mitochondria functions. Protects glioma cells from hypoxia- and ROS-induced cell death by inhibiting glycolysis and activating mitochondrial energy metabolism and oxygen consumption in a TKTL1-dependent and p53/TP53-independent manner. Plays a role in cancer cell survival by promoting DNA repair through activating PPP flux in a CDK5-ATM-dependent signaling pathway during hypoxia and/or genome stress-induced DNA damage responses. Involved in intestinal tumor progression. The chain is Fructose-2,6-bisphosphatase TIGAR from Bos taurus (Bovine).